We begin with the raw amino-acid sequence, 610 residues long: MSDQIADIQLEHQQYVAPLGDWQRTHSCCELTAADVGNDVCIMGWVQYRRDHGGLIFVDLRDRKGLTQVVFSPDFAPEAHKDAHIVRSEYVLAIRGRVRPRPEGMTNPGMKTGEIEVVVSEWKLLNTSKTPPFLIEDRTEASENLRLAWRYLDLRRPRMARNFMLRHRAAQSARRYLDELDFLEIETPYLTKATPEGARDFLVPSRLNHGMFYALPQSPQIFKQLLMVSGMDRYYQIVRCFRDEDMRADRQLEFTQIDIEMSFVDEERVMSMAEGLMSRVMKDTLGVDVTVPFPRMTYDQAMGEYGVDKPDTRFDLRLKDVTDAVRGSEFKLFAKAPLVKAMRVPGGETMTRKEIDEFTEFVKIYGAQGLAWIKIREGEWQSPIAKFLSEAERAALVAALGLEVGDIVFFQAGEPGMVNAALGNLRVKLGQHLGLIPEDTYNFLWVTDFPLFEYDEEEKRYVACHHPFTSPKDGHFDLMTSDPAAARARAYDMVLNGYELGGGSIRIHSAEVQRRMFAALGLDPQEAEEKFGFLIQALEHGAPPHGGIAFGMDRLVMLLTGSPSIRDVIAFPKTQKATCLMTQAPDAVSARQLRDLGIRLRETPQEQKPE.

Glu-196 lines the L-aspartate pocket. Positions 220–223 are aspartate; the sequence is QIFK. Arg-242 provides a ligand contact to L-aspartate. ATP-binding positions include 242–244 and Gln-251; that span reads RDE. His-465 contacts L-aspartate. Residue Glu-499 participates in ATP binding. Arg-506 provides a ligand contact to L-aspartate. 551–554 is an ATP binding site; it reads GMDR.

This sequence belongs to the class-II aminoacyl-tRNA synthetase family. Type 1 subfamily. Homodimer.

The protein resides in the cytoplasm. The enzyme catalyses tRNA(Asx) + L-aspartate + ATP = L-aspartyl-tRNA(Asx) + AMP + diphosphate. Its function is as follows. Aspartyl-tRNA synthetase with relaxed tRNA specificity since it is able to aspartylate not only its cognate tRNA(Asp) but also tRNA(Asn). Reaction proceeds in two steps: L-aspartate is first activated by ATP to form Asp-AMP and then transferred to the acceptor end of tRNA(Asp/Asn). This chain is Aspartate--tRNA(Asp/Asn) ligase, found in Nitratidesulfovibrio vulgaris (strain ATCC 29579 / DSM 644 / CCUG 34227 / NCIMB 8303 / VKM B-1760 / Hildenborough) (Desulfovibrio vulgaris).